Consider the following 29-residue polypeptide: Small toxic protein TisB (29 aa).

The helical transmembrane segment at 6–28 (IAILILKLIVAALQLLDAVLKYL) threads the bilayer.

Its subcellular location is the cell inner membrane. Functionally, toxic component of a type I toxin-antitoxin (TA) system. Overexpression causes cessation of growth, induces stress-response, a number of membrane protein genes, and leads to cell death. Inhibits ATP synthesis, ATP levels drop drastically quickly after induction. Part of the programmed response to DNA damage; damage leads to increased accumulation of the protein which slows or stops bacterial growth, probably allowing DNA repair before cells continue to grow. This Escherichia coli (strain K12) protein is Small toxic protein TisB (tisB).